Consider the following 908-residue polypeptide: 26S proteasome non-ATPase regulatory subunit 2 (908 aa).

Met-1 carries the post-translational modification N-acetylmethionine. Residues 1–51 (MEEGGRDKTPVQSQQPSATTPSGADEKSSGKERRDAGEKDKEQELSEEDKQ) are disordered. Phosphothreonine is present on residues Thr-9 and Thr-20. Positions 10 to 22 (PVQSQQPSATTPS) are enriched in polar residues. Basic and acidic residues predominate over residues 24-51 (ADEKSSGKERRDAGEKDKEQELSEEDKQ). 2 positions are modified to phosphoserine: Ser-29 and Ser-147. Tyr-194 is modified (phosphotyrosine). Phosphoserine is present on residues Ser-361 and Ser-363. PC repeat units lie at residues 409-442 (SAAA…YIKS), 443-479 (GALL…TMRL), 480-514 (GSIF…SMEV), 517-551 (VTAL…TELK), and 560-589 (LGLG…PFRS). An N6-acetyllysine modification is found at Lys-551. A compositionally biased stretch (basic and acidic residues) spans 623–643 (KEKEEDKDKKEKKDKDKKEAP). The segment at 623–645 (KEKEEDKDKKEKKDKDKKEAPAD) is disordered. PC repeat units follow at residues 692–723 (LALA…EVSY) and 742–757 (AAML…KDPN). A required for interaction with UBLCP1 region spans residues 708–903 (DTLSKFSHDA…LEGFVILRKN (196 aa)).

This sequence belongs to the proteasome subunit S2 family. As to quaternary structure, component of the 19S proteasome regulatory particle complex. The 26S proteasome consists of a 20S core particle (CP) and two 19S regulatory subunits (RP). The regulatory particle is made of a lid composed of 9 subunits, a base containing 6 ATPases and few additional components including PSMD2. Interacts with RPGRIP1L. Interacts with CRY1 in a KDM8-dependent manner. Interacts (via C-terminus) with phosphatase UBLCP1 (via ubiquitin-like domain); the interaction recruits UBLCP1 to the 19S regulatory particle where it dephosphorylates 19S subunit PSMC2/RPT1 which impairs PSMC2 ATPase activity and disrupts 26S proteasome assembly.

Its function is as follows. Component of the 26S proteasome, a multiprotein complex involved in the ATP-dependent degradation of ubiquitinated proteins. This complex plays a key role in the maintenance of protein homeostasis by removing misfolded or damaged proteins, which could impair cellular functions, and by removing proteins whose functions are no longer required. Therefore, the proteasome participates in numerous cellular processes, including cell cycle progression, apoptosis, or DNA damage repair. Binds to the intracellular domain of tumor necrosis factor type 1 receptor. The binding domain of TRAP1 and TRAP2 resides outside the death domain of TNFR1. This is 26S proteasome non-ATPase regulatory subunit 2 (Psmd2) from Mus musculus (Mouse).